Reading from the N-terminus, the 248-residue chain is Triosephosphate isomerase (248 aa).

9 to 11 (NWK) serves as a coordination point for substrate. His94 acts as the Electrophile in catalysis. Glu166 acts as the Proton acceptor in catalysis. Residues Gly172, Ser212, and 233–234 (GG) each bind substrate.

This sequence belongs to the triosephosphate isomerase family. As to quaternary structure, homodimer.

The protein resides in the cytoplasm. It carries out the reaction D-glyceraldehyde 3-phosphate = dihydroxyacetone phosphate. Its pathway is carbohydrate biosynthesis; gluconeogenesis. It functions in the pathway carbohydrate degradation; glycolysis; D-glyceraldehyde 3-phosphate from glycerone phosphate: step 1/1. Functionally, involved in the gluconeogenesis. Catalyzes stereospecifically the conversion of dihydroxyacetone phosphate (DHAP) to D-glyceraldehyde-3-phosphate (G3P). This Clostridium acetobutylicum (strain ATCC 824 / DSM 792 / JCM 1419 / IAM 19013 / LMG 5710 / NBRC 13948 / NRRL B-527 / VKM B-1787 / 2291 / W) protein is Triosephosphate isomerase.